A 111-amino-acid polypeptide reads, in one-letter code: Resistin-like alpha (111 aa).

An N-terminal signal peptide occupies residues 1 to 23; it reads MKTATCSLLICVFLLQLMVPVNT. 5 disulfide bridges follow: Cys-55/Cys-108, Cys-67/Cys-107, Cys-76/Cys-93, Cys-78/Cys-95, and Cys-82/Cys-97.

The protein belongs to the resistin/FIZZ family. Monomer. In terms of tissue distribution, highest levels in adipose tissue.

The protein resides in the secreted. Probable hormone. Plays a role in pulmonary vascular remodeling. In Rattus norvegicus (Rat), this protein is Resistin-like alpha (Retnla).